The chain runs to 545 residues: Beta-sesquiphellandrene synthase (545 aa).

Asp-299, Asp-303, Asn-443, Ser-447, and Glu-451 together coordinate Mg(2+). The DDXXD motif motif lies at 299-303; that stretch reads DDIMD.

It belongs to the terpene synthase family. The cofactor is Mg(2+). Requires Mn(2+) as cofactor.

It is found in the cytoplasm. The enzyme catalyses (2E,6E)-farnesyl diphosphate = beta-sesquiphellandrene + diphosphate. It participates in secondary metabolite biosynthesis; terpenoid biosynthesis. Sesquiterpene synthase converting farnesyl diphosphate into beta-sesquiphellandrene and six minor products, zingiberene, 7-epi-sesquithujene, sesquisabinene A, (E)-alpha-bergamotene, (E)-beta-farnesene and beta-bisabolene. Can also accept geranyl diphosphate as substrate, producing nine monoterpenes, with myrcene and limonene as the major products. In Sorghum bicolor (Sorghum), this protein is Beta-sesquiphellandrene synthase (TPS2).